A 313-amino-acid polypeptide reads, in one-letter code: tRNA pseudouridine synthase B (313 aa).

The Nucleophile role is filled by aspartate 46.

Belongs to the pseudouridine synthase TruB family. Type 1 subfamily.

It carries out the reaction uridine(55) in tRNA = pseudouridine(55) in tRNA. In terms of biological role, responsible for synthesis of pseudouridine from uracil-55 in the psi GC loop of transfer RNAs. The sequence is that of tRNA pseudouridine synthase B from Nitrosospira multiformis (strain ATCC 25196 / NCIMB 11849 / C 71).